A 597-amino-acid polypeptide reads, in one-letter code: Kelch-like protein 21 (597 aa).

The BTB domain occupies 35 to 103 (LDVTLEAAGG…SYTGRVAVSG (69 aa)). One can recognise a BACK domain in the interval 138–239 (CLDMQDFAEA…RRFYLLAHVE (102 aa)). Kelch repeat units lie at residues 287 to 335 (ILVL…ALGN), 336 to 382 (DIYV…VLDG), 384 to 422 (LYVV…ACRG), 424 to 463 (LYAI…SFAP), 464 to 512 (KTVT…VLGG), and 513 to 560 (KLYV…SIFR). The tract at residues 570 to 597 (GRGFELDGGSSDMDVGQPRPPQNPAELH) is disordered. Residues 587 to 597 (PRPPQNPAELH) show a composition bias toward pro residues.

Component of the BCR(KLHL21) E3 ubiquitin ligase complex, at least composed of CUL3, KLHL21 and RBX1.

The protein resides in the cytoplasm. The protein localises to the cytoskeleton. Its subcellular location is the spindle. It participates in protein modification; protein ubiquitination. In terms of biological role, substrate-specific adapter of a BCR (BTB-CUL3-RBX1) E3 ubiquitin-protein ligase complex required for efficient chromosome alignment and cytokinesis. The BCR(KLHL21) E3 ubiquitin ligase complex regulates localization of the chromosomal passenger complex (CPC) from chromosomes to the spindle midzone in anaphase and mediates the ubiquitination of AURKB. Ubiquitination of AURKB by BCR(KLHL21) E3 ubiquitin ligase complex may not lead to its degradation by the proteasome. The sequence is that of Kelch-like protein 21 (KLHL21) from Bos taurus (Bovine).